The primary structure comprises 693 residues: Heat shock protein homolog SSE2 (693 aa).

The tract at residues 653–693 (LRANQETSKMNDIAEKLAEQRRARAASDDSDDNNDENMDLD) is disordered. Basic and acidic residues predominate over residues 664-679 (DIAEKLAEQRRARAAS). The segment covering 680–693 (DDSDDNNDENMDLD) has biased composition (acidic residues).

Belongs to the heat shock protein 70 family.

Functionally, has a calcium-dependent calmodulin-binding activity. This Saccharomyces cerevisiae (strain ATCC 204508 / S288c) (Baker's yeast) protein is Heat shock protein homolog SSE2 (SSE2).